Reading from the N-terminus, the 178-residue chain is Alkyl hydroperoxide reductase AhpD (178 aa).

Cys130 functions as the Proton donor in the catalytic mechanism. An intrachain disulfide couples Cys130 to Cys133. The active-site Cysteine sulfenic acid (-SOH) intermediate is Cys133.

Belongs to the AhpD family. Homotrimer.

The enzyme catalyses N(6)-[(R)-dihydrolipoyl]-L-lysyl-[lipoyl-carrier protein] + a hydroperoxide = N(6)-[(R)-lipoyl]-L-lysyl-[lipoyl-carrier protein] + an alcohol + H2O. Its function is as follows. Antioxidant protein with alkyl hydroperoxidase activity. Required for the reduction of the AhpC active site cysteine residues and for the regeneration of the AhpC enzyme activity. This Mycobacterium ulcerans (strain Agy99) protein is Alkyl hydroperoxide reductase AhpD.